A 176-amino-acid chain; its full sequence is Probable RNA-binding protein EIF1AD (176 aa).

The S1-like domain maps to 5-89; that stretch reads TKKRYITNKV…VKGEIEYILD (85 aa). Residues 117–128 are compositionally biased toward basic and acidic residues; the sequence is AKRGKANDKMID. Residues 117–176 are disordered; the sequence is AKRGKANDKMIDDDMLPPSESEEEDDESEDEIEDTYDEDEETDDEEFDTYNPNRMQAPSK. A compositionally biased stretch (acidic residues) spans 129 to 164; the sequence is DDMLPPSESEEEDDESEDEIEDTYDEDEETDDEEFD. Over residues 166–176 the composition is skewed to polar residues; it reads YNPNRMQAPSK.

The protein belongs to the EIF1AD family.

In Caenorhabditis briggsae, this protein is Probable RNA-binding protein EIF1AD.